The primary structure comprises 345 residues: D-amino-acid oxidase (345 aa).

5 residues coordinate FAD: S10, I13, S49, G53, and N55. Residues Y230 and R290 each contribute to the (R)-lactate site. Positions 230 and 290 each coordinate anthranilate. Positions 290, 317, 320, 321, and 322 each coordinate FAD. The Microbody targeting signal signature appears at 343 to 345 (AKL).

The protein belongs to the DAMOX/DASOX family. Requires FAD as cofactor.

The protein localises to the peroxisome matrix. The catalysed reaction is a D-alpha-amino acid + O2 + H2O = a 2-oxocarboxylate + H2O2 + NH4(+). It carries out the reaction D-methionine + O2 + H2O = 4-methylsulfanyl-2-oxobutanoate + H2O2 + NH4(+). In terms of biological role, catalyzes the oxidative deamination of D-amino acids with broad substrate specificity. Enables the organism to utilize D-amino acids as a source of nutrients. Enables the organism to utilize D-alanine as a nitrogen source, although it is not strictly required for this process. Also enables utilization of D-alanine as a carbon source. The chain is D-amino-acid oxidase from Candida boidinii (Yeast).